The primary structure comprises 587 residues: Glutamine--tRNA ligase (587 aa).

A 'HIGH' region motif is present at residues 58–68; that stretch reads PEPNGYLHIGH. Residues 59 to 61 and 65 to 71 each bind ATP; these read EPN and HIGHAKS. 2 residues coordinate L-glutamine: Asp-91 and Tyr-240. ATP contacts are provided by residues Thr-259 and 294–295; that span reads RL. Positions 301–305 match the 'KMSKS' region motif; it reads VTSKR.

Belongs to the class-I aminoacyl-tRNA synthetase family. In terms of assembly, monomer.

Its subcellular location is the cytoplasm. It catalyses the reaction tRNA(Gln) + L-glutamine + ATP = L-glutaminyl-tRNA(Gln) + AMP + diphosphate. The protein is Glutamine--tRNA ligase of Bordetella pertussis (strain Tohama I / ATCC BAA-589 / NCTC 13251).